Here is a 285-residue protein sequence, read N- to C-terminus: uncharacterized protein (285 aa).

The region spanning 184-282 (HSICNWVQDN…GLTPGEYSAR (99 aa)) is the HTH araC/xylS-type domain. 2 DNA-binding regions (H-T-H motif) span residues 201-222 (ESVA…AQHG) and 249-272 (IHEV…RRQF).

This is an uncharacterized protein from Escherichia coli (strain K12).